Here is a 185-residue protein sequence, read N- to C-terminus: Heavy metal-associated isoprenylated plant protein 11 (185 aa).

The 68-residue stretch at 39–106 (QQNTNVVFKL…ICKHVAIIAA (68 aa)) folds into the HMA domain. The span at 109-158 (IREPEQNRNPVTRREPNREPEQNRSRVTRREPSREPEPNRAPLARRESRP) shows a compositional bias: basic and acidic residues. Residues 109–185 (IREPEQNRNP…GENSDGCIIM (77 aa)) are disordered. C182 is modified (cysteine methyl ester). The S-farnesyl cysteine moiety is linked to residue C182. The propeptide at 183-185 (IIM) is removed in mature form.

It belongs to the HIPP family.

Its function is as follows. Probable heavy-metal-binding protein. The polypeptide is Heavy metal-associated isoprenylated plant protein 11 (Arabidopsis thaliana (Mouse-ear cress)).